Here is a 566-residue protein sequence, read N- to C-terminus: MKKAKAIFSLVVALMVLAIFCFAQNTGSTATTAAAAVDSNNDDWLHCKGNKIYDMYGNEVWLTGANWFGFNCSENCFHGAWYDVKTILTSIADRGINLLRIPISTELLYSWMIGKPNPVSSVTASNNPPYHVVNPDFYDPETDDVKNSMEIFDIIMGYCKELGIKVMIDIHSPDANNSGHNYELWYGKETSTCGVVTTKMWIDTLVWLADKYKNDDTIIAFDLKNEPHGKRGYTAEVPKLLAKWDNSTDENNWKYAAETCAKAILEVNPKVLIVIEGVEQYPKTEKGYTYDTPDIWGATGDASPWYSAWWGGNLRGVKDYPIDLGPLNSQIVYSPHDYGPSVYAQPWFEKDFTMQTLLDDYWYDTWAYIHDQGIAPILIGEWGGHMDGGKNQKWMTLLRDYIVQNRIHHTFWCINPNSGDTGGLLGNDWSTWDEAKYALLKPALWQTKDGKFIGLDHKIPLGSKGISLGEYYGTPQASDPPATPTATPTKPAASSTPSFIYGDINSDGNVNSTDLGILKRIIVKNPPASANMDAADVNADGKVNSTDYTVLKRYLLRSIDKLPHTT.

An N-terminal signal peptide occupies residues 1–30 (MKKAKAIFSLVVALMVLAIFCFAQNTGSTA). Glutamate 226 acts as the Proton donor in catalysis. Glutamate 381 acts as the Nucleophile in catalysis. The tract at residues 473 to 494 (GTPQASDPPATPTATPTKPAAS) is disordered. Low complexity predominate over residues 474 to 494 (TPQASDPPATPTATPTKPAAS). In terms of domain architecture, Dockerin spans 497–564 (PSFIYGDINS…LLRSIDKLPH (68 aa)).

It belongs to the glycosyl hydrolase 5 (cellulase A) family.

It carries out the reaction Endohydrolysis of (1-&gt;4)-beta-D-glucosidic linkages in cellulose, lichenin and cereal beta-D-glucans.. Functionally, this enzyme catalyzes the endohydrolysis of 1,4-beta-glucosidic linkages in cellulose, lichenin and cereal beta-D-glucans. This is Endoglucanase G (celG) from Acetivibrio thermocellus (strain ATCC 27405 / DSM 1237 / JCM 9322 / NBRC 103400 / NCIMB 10682 / NRRL B-4536 / VPI 7372) (Clostridium thermocellum).